We begin with the raw amino-acid sequence, 357 residues long: Protein RecA (357 aa).

Residue 73–80 (GPESSGKT) coordinates ATP.

Belongs to the RecA family.

Its subcellular location is the cytoplasm. Its function is as follows. Can catalyze the hydrolysis of ATP in the presence of single-stranded DNA, the ATP-dependent uptake of single-stranded DNA by duplex DNA, and the ATP-dependent hybridization of homologous single-stranded DNAs. It interacts with LexA causing its activation and leading to its autocatalytic cleavage. The chain is Protein RecA from Nitratidesulfovibrio vulgaris (strain ATCC 29579 / DSM 644 / CCUG 34227 / NCIMB 8303 / VKM B-1760 / Hildenborough) (Desulfovibrio vulgaris).